Consider the following 482-residue polypeptide: Membrane-bound lytic murein transglycosylase F (482 aa).

An N-terminal signal peptide occupies residues 1–18; sequence MKGLFIRIVLAICLSLWA. The non-LT domain stretch occupies residues 19–266; it reads IDMVFPWQQI…RIEEKYFNHL (248 aa). The segment at 267–482 is LT domain; the sequence is NQFDYVDTRS…ISTQTQQEQR (216 aa). Glu311 is an active-site residue.

In the N-terminal section; belongs to the bacterial solute-binding protein 3 family. It in the C-terminal section; belongs to the transglycosylase Slt family.

The protein localises to the cell outer membrane. It catalyses the reaction Exolytic cleavage of the (1-&gt;4)-beta-glycosidic linkage between N-acetylmuramic acid (MurNAc) and N-acetylglucosamine (GlcNAc) residues in peptidoglycan, from either the reducing or the non-reducing ends of the peptidoglycan chains, with concomitant formation of a 1,6-anhydrobond in the MurNAc residue.. In terms of biological role, murein-degrading enzyme that degrades murein glycan strands and insoluble, high-molecular weight murein sacculi, with the concomitant formation of a 1,6-anhydromuramoyl product. Lytic transglycosylases (LTs) play an integral role in the metabolism of the peptidoglycan (PG) sacculus. Their lytic action creates space within the PG sacculus to allow for its expansion as well as for the insertion of various structures such as secretion systems and flagella. The protein is Membrane-bound lytic murein transglycosylase F of Histophilus somni (strain 129Pt) (Haemophilus somnus).